Here is a 61-residue protein sequence, read N- to C-terminus: Potassium channel toxin kappa-KTx 2.8 (61 aa).

The first 21 residues, 1–21 (GTVYVFLLLLAFGIFTDISNA), serve as a signal peptide directing secretion. Residues 22–35 (CSEQMDDEDSYEVE) constitute a propeptide that is removed on maturation. Intrachain disulfides connect Cys41/Cys59 and Cys45/Cys55.

It belongs to the short scorpion toxin superfamily. Potassium channel inhibitor kappa-KTx family. Kappa-KTx 2 subfamily. As to expression, expressed by the venom gland.

The protein resides in the secreted. In terms of biological role, voltage-gated potassium channel inhibitor (Kv) that acts on Kv1.3/KCNA3 and Kv7.1/KCNQ1. 1 uM of the toxin inhibits Kv1.3/KCNA3 currents by 35.1%, whereas 10 uM of the toxin inhibits Kv7.1/KCNQ1 currents by 44.9%. This is Potassium channel toxin kappa-KTx 2.8 from Heterometrus petersii (Asian forest scorpion).